The sequence spans 216 residues: Ribonuclease T (216 aa).

In terms of domain architecture, Exonuclease spans 28-202 (VVVDVETGGF…YDTEQTARLF (175 aa)). Mg(2+)-binding residues include aspartate 31, glutamate 33, histidine 189, and aspartate 194. Catalysis depends on histidine 189, which acts as the Proton donor/acceptor.

This sequence belongs to the RNase T family. Homodimer. The cofactor is Mg(2+).

In terms of biological role, trims short 3' overhangs of a variety of RNA species, leaving a one or two nucleotide 3' overhang. Responsible for the end-turnover of tRNA: specifically removes the terminal AMP residue from uncharged tRNA (tRNA-C-C-A). Also appears to be involved in tRNA biosynthesis. This Xanthomonas campestris pv. campestris (strain 8004) protein is Ribonuclease T.